Consider the following 156-residue polypeptide: Small ribosomal subunit protein uS7 (156 aa).

It belongs to the universal ribosomal protein uS7 family. In terms of assembly, part of the 30S ribosomal subunit. Contacts proteins S9 and S11.

In terms of biological role, one of the primary rRNA binding proteins, it binds directly to 16S rRNA where it nucleates assembly of the head domain of the 30S subunit. Is located at the subunit interface close to the decoding center, probably blocks exit of the E-site tRNA. In Synechococcus elongatus (strain ATCC 33912 / PCC 7942 / FACHB-805) (Anacystis nidulans R2), this protein is Small ribosomal subunit protein uS7.